The following is a 124-amino-acid chain: MATVNQLVRKPRAPKVDKTNVPALNACPQKRGVCTRVYTTTPKKPNSALRKVARVRLTNGFEVTSYIGGEGHNLQEHSVILIRGGRVKDLPGVRYHTIRGALDCAGVTSRRQSRSKYGAKRPKS.

A 3-methylthioaspartic acid modification is found at Asp89.

It belongs to the universal ribosomal protein uS12 family. As to quaternary structure, part of the 30S ribosomal subunit. Contacts proteins S8 and S17. May interact with IF1 in the 30S initiation complex.

Functionally, with S4 and S5 plays an important role in translational accuracy. Interacts with and stabilizes bases of the 16S rRNA that are involved in tRNA selection in the A site and with the mRNA backbone. Located at the interface of the 30S and 50S subunits, it traverses the body of the 30S subunit contacting proteins on the other side and probably holding the rRNA structure together. The combined cluster of proteins S8, S12 and S17 appears to hold together the shoulder and platform of the 30S subunit. In Shewanella baltica (strain OS223), this protein is Small ribosomal subunit protein uS12.